The sequence spans 320 residues: Fructose-1,6-bisphosphatase class 1 (320 aa).

Residues Glu-105, Asp-124, Leu-126, and Asp-127 each coordinate Mg(2+). Substrate contacts are provided by residues 127–130 (DGSS), Tyr-233, and Lys-263. Glu-269 lines the Mg(2+) pocket.

It belongs to the FBPase class 1 family. As to quaternary structure, homotetramer. Mg(2+) is required as a cofactor.

It localises to the cytoplasm. It catalyses the reaction beta-D-fructose 1,6-bisphosphate + H2O = beta-D-fructose 6-phosphate + phosphate. The protein operates within carbohydrate biosynthesis; gluconeogenesis. This chain is Fructose-1,6-bisphosphatase class 1, found in Methanocorpusculum labreanum (strain ATCC 43576 / DSM 4855 / Z).